Consider the following 249-residue polypeptide: Cilia- and flagella-associated protein 410 (249 aa).

3 LRR repeats span residues 19-40 (NVRK…REMP), 41-62 (SLEV…RSCR), and 63-84 (RLSE…FYLK). One can recognise an LRRCT domain in the interval 97–137 (NPCCGTSPHLYRMTVLRNLPHLQKLDNQAVTEEELTRALME). A disordered region spans residues 146–203 (HREGAGNGCPKPPYALNSVSSATETSQHLLSYTEETEVQGQTTTDQSPSFSPRDTMRS). The span at 162–175 (NSVSSATETSQHLL) shows a compositional bias: polar residues.

Found in a complex with CFAP410, NEK1 and SPATA7. Interacts with NEK1. In terms of tissue distribution, expressed in the retina.

Its subcellular location is the cell projection. The protein resides in the cilium. The protein localises to the cytoplasm. It localises to the cytoskeleton. It is found in the cilium basal body. Its subcellular location is the mitochondrion. The protein resides in the photoreceptor outer segment. In terms of biological role, plays a role in cilia formation and/or maintenance. Plays a role in the regulation of cell morphology and cytoskeletal organization. Involved in DNA damage repair. The chain is Cilia- and flagella-associated protein 410 from Mus musculus (Mouse).